The sequence spans 233 residues: Glyceraldehyde-3-phosphate dehydrogenase A, chloroplastic (233 aa).

D-glyceraldehyde 3-phosphate contacts are provided by residues 49–51 (SCT), T80, R95, 108–109 (TG), and R131. C50 functions as the Nucleophile in the catalytic mechanism. N213 contributes to the NADP(+) binding site.

It belongs to the glyceraldehyde-3-phosphate dehydrogenase family. In terms of assembly, tetramer of either four A chains (GAPDH 2) or two A and two B chains (GAPDH 1).

It localises to the plastid. The protein resides in the chloroplast. It carries out the reaction D-glyceraldehyde 3-phosphate + phosphate + NADP(+) = (2R)-3-phospho-glyceroyl phosphate + NADPH + H(+). Its pathway is carbohydrate biosynthesis; Calvin cycle. The chain is Glyceraldehyde-3-phosphate dehydrogenase A, chloroplastic (GAPA) from Sinapis alba (White mustard).